We begin with the raw amino-acid sequence, 550 residues long: CTP synthase (550 aa).

The interval 1–272 (MKTKFIFITG…DQKITSFLNL (272 aa)) is amidoligase domain. A CTP-binding site is contributed by Ser-14. Ser-14 is a binding site for UTP. 15–20 (SLGKGL) contacts ATP. Tyr-55 contributes to the L-glutamine binding site. Asp-72 is an ATP binding site. Residues Asp-72 and Glu-146 each contribute to the Mg(2+) site. Residues 153 to 155 (DIE), 193 to 198 (KTKPTQ), and Lys-229 each bind CTP. UTP-binding positions include 193–198 (KTKPTQ) and Lys-229. A Glutamine amidotransferase type-1 domain is found at 297–550 (TITIVGKYVG…IHAACNHNKQ (254 aa)). Gly-359 contacts L-glutamine. Residue Cys-386 is the Nucleophile; for glutamine hydrolysis of the active site. L-glutamine is bound by residues 387–390 (LGMQ), Glu-410, and Arg-478. Residues His-523 and Glu-525 contribute to the active site.

Belongs to the CTP synthase family. In terms of assembly, homotetramer.

It carries out the reaction UTP + L-glutamine + ATP + H2O = CTP + L-glutamate + ADP + phosphate + 2 H(+). The catalysed reaction is L-glutamine + H2O = L-glutamate + NH4(+). The enzyme catalyses UTP + NH4(+) + ATP = CTP + ADP + phosphate + 2 H(+). Its pathway is pyrimidine metabolism; CTP biosynthesis via de novo pathway; CTP from UDP: step 2/2. Its activity is regulated as follows. Allosterically activated by GTP, when glutamine is the substrate; GTP has no effect on the reaction when ammonia is the substrate. The allosteric effector GTP functions by stabilizing the protein conformation that binds the tetrahedral intermediate(s) formed during glutamine hydrolysis. Inhibited by the product CTP, via allosteric rather than competitive inhibition. Catalyzes the ATP-dependent amination of UTP to CTP with either L-glutamine or ammonia as the source of nitrogen. Regulates intracellular CTP levels through interactions with the four ribonucleotide triphosphates. The polypeptide is CTP synthase (Lawsonia intracellularis (strain PHE/MN1-00)).